The following is a 695-amino-acid chain: Segment polarity protein dishevelled homolog DVL-1 (695 aa).

The region spanning 1 to 85 (MAETKIIYHM…RVVSWLVLAE (85 aa)) is the DIX domain. The tract at residues 89-237 (SDAGSQGTDS…LRQADRASSF (149 aa)) is disordered. The span at 142-151 (SHRRERARRR) shows a compositional bias: basic residues. A compositionally biased stretch (basic and acidic residues) spans 152 to 171 (NREEAARTNGHPRGDRRRDV). A compositionally biased stretch (low complexity) spans 176–192 (DSASTALSSELESSSFV). Serine 194 carries the post-translational modification Phosphoserine. Over residues 200–214 (TSRLSSSTEQSTSSR) the composition is skewed to low complexity. Over residues 215–228 (LIRKHKRRRRKQRL) the composition is skewed to basic residues. Positions 251-323 (TVTLNMERHH…NDDAVRVLRE (73 aa)) constitute a PDZ domain. The region spanning 425 to 499 (PDSGLEIRDR…SEQCYYVFGD (75 aa)) is the DEP domain. The disordered stretch occupies residues 543–667 (PGPPPCFPPA…PGGPPVRELA (125 aa)). Positions 551–580 (PAYQDPGFSYGSGSTGSQQSEGSKSSGSTR) are enriched in low complexity. Polar residues predominate over residues 625 to 636 (SRGSSPRSQASA).

It belongs to the DSH family. In terms of assembly, interacts with CXXC4. Interacts (via PDZ domain) with NXN. Interacts with BRD7 and INVS. Interacts (via PDZ domain) with VANGL1 and VANGL2 (via C-terminus). Interacts with ARRB1; the interaction is enhanced by phosphorylation of DVL1. Interacts with CYLD. Interacts (via PDZ domain) with RYK. Self-associates (via DIX domain) and forms higher homooligomers. Interacts (via PDZ domain) with DACT1 and FZD7, where DACT1 and FZD7 compete for the same binding site. Interacts (via DEP domain) with MUSK; the interaction is direct and mediates the formation a DVL1, MUSK and PAK1 ternary complex involved in AChR clustering. Interacts (via PDZ domain) with TMEM88. Interacts with DCDC2. Interacts with FOXK2. Interacts with PKD1 (via extracellular domain). Interacts (via PDZ domain) with CCDC88C/DAPLE; competes with CCDC88C for binding to frizzled receptor FZD7 and dissociates from CCDC88C following initiation of non-canonical Wnt signaling when CCDC88C displaces DVL1 from ligand-activated FZD7. Post-translationally, ubiquitinated; undergoes both 'Lys-48'-linked ubiquitination, leading to its subsequent degradation by the ubiquitin-proteasome pathway, and 'Lys-63'-linked ubiquitination. The interaction with INVS is required for ubiquitination. Deubiquitinated by CYLD, which acts on 'Lys-63'-linked ubiquitin chains.

It localises to the cell membrane. It is found in the cytoplasm. The protein resides in the cytosol. Its subcellular location is the cytoplasmic vesicle. In terms of biological role, participates in Wnt signaling by binding to the cytoplasmic C-terminus of frizzled family members and transducing the Wnt signal to down-stream effectors. Plays a role both in canonical and non-canonical Wnt signaling. Plays a role in the signal transduction pathways mediated by multiple Wnt genes. Required for LEF1 activation upon WNT1 and WNT3A signaling. DVL1 and PAK1 form a ternary complex with MUSK which is important for MUSK-dependent regulation of AChR clustering during the formation of the neuromuscular junction (NMJ). The sequence is that of Segment polarity protein dishevelled homolog DVL-1 (DVL1) from Homo sapiens (Human).